We begin with the raw amino-acid sequence, 355 residues long: Epoxide hydrolase 2 (355 aa).

In terms of domain architecture, AB hydrolase-1 spans 78 to 323 (VLLMVHGFPE…IRGASHWVQQ (246 aa)). Aspartate 152 acts as the Nucleophile in catalysis. Tyrosine 263 functions as the Proton donor in the catalytic mechanism. Histidine 319 serves as the catalytic Proton acceptor.

Belongs to the AB hydrolase superfamily. Epoxide hydrolase family.

It catalyses the reaction an epoxide + H2O = an ethanediol. It participates in lipid metabolism. Catalyzes the hydrolysis of epoxide-containing fatty acids. Active in vitro against trans-1,3-diphenylpropene oxide (t-DPPO), epoxyeicosatrienoic acids (EETs) including 8,9-EET, 11,12-EET and 14,15-EET and the linoleic acid metabolites 12,13-epoxy-9-octadecenoate (12,13-EpOME) and 9,10-epoxy-12-octadecenoate (9,10-EpOME). In Caenorhabditis elegans, this protein is Epoxide hydrolase 2.